The chain runs to 72 residues: Cytochrome b-c1 complex subunit 8-2, mitochondrial (72 aa).

The Mitochondrial matrix portion of the chain corresponds to 1-41 (MGKQPVKLKAVVYALSPFQQKIMTGLWKDLPEKIHHKVSEN). A helical transmembrane segment spans residues 42–58 (WISTILLVAPVVGTYSY). Residues 59–72 (AQYFKEQEKLEHRF) are Mitochondrial intermembrane-facing.

The protein belongs to the UQCRQ/QCR8 family. Component of the ubiquinol-cytochrome c oxidoreductase (cytochrome b-c1 complex, complex III, CIII), a multisubunit enzyme composed of 10 subunits. The complex is composed of 3 respiratory subunits cytochrome b (MT-CYB), cytochrome c1 (CYC1-1 or CYC1-2) and Rieske protein (UCR1-1 or UCR1-2), 2 core protein subunits MPPalpha1 (or MPPalpha2) and MPPB, and 5 low-molecular weight protein subunits QCR7-1 (or QCR7-2), UCRQ-1 (or UCRQ-2), QCR9, UCRY and probably QCR6-1 (or QCR6-2). The complex exists as an obligatory dimer and forms supercomplexes (SCs) in the inner mitochondrial membrane with NADH-ubiquinone oxidoreductase (complex I, CI), resulting in different assemblies (supercomplexes SCI(1)III(2) and SCI(2)III(4)).

It is found in the mitochondrion inner membrane. Its function is as follows. Component of the ubiquinol-cytochrome c oxidoreductase, a multisubunit transmembrane complex that is part of the mitochondrial electron transport chain which drives oxidative phosphorylation. The respiratory chain contains 3 multisubunit complexes succinate dehydrogenase (complex II, CII), ubiquinol-cytochrome c oxidoreductase (cytochrome b-c1 complex, complex III, CIII) and cytochrome c oxidase (complex IV, CIV), that cooperate to transfer electrons derived from NADH and succinate to molecular oxygen, creating an electrochemical gradient over the inner membrane that drives transmembrane transport and the ATP synthase. The cytochrome b-c1 complex catalyzes electron transfer from ubiquinol to cytochrome c, linking this redox reaction to translocation of protons across the mitochondrial inner membrane, with protons being carried across the membrane as hydrogens on the quinol. In the process called Q cycle, 2 protons are consumed from the matrix, 4 protons are released into the intermembrane space and 2 electrons are passed to cytochrome c. The protein is Cytochrome b-c1 complex subunit 8-2, mitochondrial (UCRQ-2) of Arabidopsis thaliana (Mouse-ear cress).